The chain runs to 236 residues: Exosome complex component Rrp4 (236 aa).

One can recognise an S1 motif domain in the interval 64-133 (GDKVIGKVIE…EIKESWLTLK (70 aa)). In terms of domain architecture, KH spans 141–199 (EGGHMVLIHASRVPRVIGKGGGMVNMVKELTATRIIIGQNGLIWIDGPIEGVTMAIAAI).

This sequence belongs to the RRP4 family. Component of the archaeal exosome complex. Forms a trimer of Rrp4 and/or Csl4 subunits. The trimer associates with a hexameric ring-like arrangement composed of 3 Rrp41-Rrp42 heterodimers.

It is found in the cytoplasm. Non-catalytic component of the exosome, which is a complex involved in RNA degradation. Increases the RNA binding and the efficiency of RNA degradation. Confers strong poly(A) specificity to the exosome. In Thermoplasma acidophilum (strain ATCC 25905 / DSM 1728 / JCM 9062 / NBRC 15155 / AMRC-C165), this protein is Exosome complex component Rrp4.